We begin with the raw amino-acid sequence, 327 residues long: Lipoyl synthase (327 aa).

[4Fe-4S] cluster contacts are provided by cysteine 66, cysteine 71, cysteine 77, cysteine 92, cysteine 96, cysteine 99, and serine 306. Residues phenylalanine 78–serine 295 form the Radical SAM core domain.

It belongs to the radical SAM superfamily. Lipoyl synthase family. [4Fe-4S] cluster serves as cofactor.

It is found in the cytoplasm. It catalyses the reaction [[Fe-S] cluster scaffold protein carrying a second [4Fe-4S](2+) cluster] + N(6)-octanoyl-L-lysyl-[protein] + 2 oxidized [2Fe-2S]-[ferredoxin] + 2 S-adenosyl-L-methionine + 4 H(+) = [[Fe-S] cluster scaffold protein] + N(6)-[(R)-dihydrolipoyl]-L-lysyl-[protein] + 4 Fe(3+) + 2 hydrogen sulfide + 2 5'-deoxyadenosine + 2 L-methionine + 2 reduced [2Fe-2S]-[ferredoxin]. Its pathway is protein modification; protein lipoylation via endogenous pathway; protein N(6)-(lipoyl)lysine from octanoyl-[acyl-carrier-protein]: step 2/2. Its function is as follows. Catalyzes the radical-mediated insertion of two sulfur atoms into the C-6 and C-8 positions of the octanoyl moiety bound to the lipoyl domains of lipoate-dependent enzymes, thereby converting the octanoylated domains into lipoylated derivatives. In Neisseria meningitidis serogroup B (strain ATCC BAA-335 / MC58), this protein is Lipoyl synthase.